A 268-amino-acid chain; its full sequence is 4-hydroxy-tetrahydrodipicolinate reductase (268 aa).

NAD(+)-binding positions include 10–15 (GSTGRM), Glu-36, 99–101 (GTT), and 123–126 (APNM). His-156 acts as the Proton donor/acceptor in catalysis. A (S)-2,3,4,5-tetrahydrodipicolinate-binding site is contributed by His-157. The active-site Proton donor is the Lys-160. A (S)-2,3,4,5-tetrahydrodipicolinate-binding site is contributed by 166–167 (GT).

Belongs to the DapB family.

Its subcellular location is the cytoplasm. It carries out the reaction (S)-2,3,4,5-tetrahydrodipicolinate + NAD(+) + H2O = (2S,4S)-4-hydroxy-2,3,4,5-tetrahydrodipicolinate + NADH + H(+). It catalyses the reaction (S)-2,3,4,5-tetrahydrodipicolinate + NADP(+) + H2O = (2S,4S)-4-hydroxy-2,3,4,5-tetrahydrodipicolinate + NADPH + H(+). It functions in the pathway amino-acid biosynthesis; L-lysine biosynthesis via DAP pathway; (S)-tetrahydrodipicolinate from L-aspartate: step 4/4. In terms of biological role, catalyzes the conversion of 4-hydroxy-tetrahydrodipicolinate (HTPA) to tetrahydrodipicolinate. The protein is 4-hydroxy-tetrahydrodipicolinate reductase of Nitrosomonas eutropha (strain DSM 101675 / C91 / Nm57).